We begin with the raw amino-acid sequence, 1113 residues long: Protein MGA2 (1113 aa).

The disordered stretch occupies residues 91 to 114; it reads TPLEEEMESNRALKEEEEDEHENK. Phosphoserine is present on serine 255. Polar residues-rich tracts occupy residues 344–357 and 437–452; these read DTTKFNNTTTSSRR and HIPSPTSMSEEGSESF. 2 disordered regions span residues 344-376 and 437-462; these read DTTKFNNTTTSSRRQLTEEESTTEYYSTDNNQL and HIPSPTSMSEEGSESFNYHHRDNDNP. Phosphoserine is present on serine 467. Residues 530 to 610 enclose the IPT/TIG domain; the sequence is PSINRVIPSQ…NENNNDDLPQ (81 aa). A disordered region spans residues 658–687; sequence IVGNDSPDSGTNGNSCSKSTGPSPNQHSMN. Over residues 663-687 the composition is skewed to polar residues; the sequence is SPDSGTNGNSCSKSTGPSPNQHSMN. ANK repeat units follow at residues 719 to 748 and 752 to 781; these read LGRTLLHLACLKNYSSLVYTLIKKGARVND and FGLTPLHFACISGDPKIIKMLLNCKVNYSL. The chain crosses the membrane as a helical span at residues 1037-1054; it reads MLIFFWIPLTLLLLTWFI.

The protein resides in the membrane. The polypeptide is Protein MGA2 (MGA2) (Saccharomyces cerevisiae (strain ATCC 204508 / S288c) (Baker's yeast)).